The chain runs to 230 residues: MYDIKKWRHIFKLDPAKHISDDDLDAICMSQTDAIMIGGTDDVTEDNVIHLMSRIRRYPLPLVLEISNIESVMPGFDFYFVPTVLNSTDVAFHNGTLLEALKTYGHSIDFEEVIFEGYVVCNADSKVAKHTKANTDLTTEDLEAYAQMVNHMYRLPVMYIEYSGIYGDVSKVQAVSEHLTETQLFYGGGISSEQQATEMAAIADTIIVGDIIYKDIKKALKTVKIKESSK.

Lys12 provides a ligand contact to sn-glycerol 1-phosphate. Mg(2+) is bound by residues Asp14 and Thr40. Residues 159–164, Gly189, and 209–210 each bind sn-glycerol 1-phosphate; these read YIEYSG and GD.

This sequence belongs to the GGGP/HepGP synthase family. Group I subfamily. As to quaternary structure, homodimer. The cofactor is Mg(2+).

It carries out the reaction sn-glycerol 1-phosphate + all-trans-heptaprenyl diphosphate = 3-heptaprenyl-sn-glycero-1-phosphate + diphosphate. Its pathway is membrane lipid metabolism; glycerophospholipid metabolism. Functionally, prenyltransferase that catalyzes in vivo the transfer of the heptaprenyl moiety of heptaprenyl pyrophosphate (HepPP; 35 carbon atoms) to the C3 hydroxyl of sn-glycerol-1-phosphate (G1P), producing heptaprenylglyceryl phosphate (HepGP). This reaction is an ether-bond-formation step in the biosynthesis of archaea-type G1P-based membrane lipids found in Bacillales. This Staphylococcus aureus (strain JH1) protein is Heptaprenylglyceryl phosphate synthase.